A 427-amino-acid polypeptide reads, in one-letter code: 3-phosphoshikimate 1-carboxyvinyltransferase (427 aa).

Residues Lys20, Ser21, and Arg25 each coordinate 3-phosphoshikimate. Lys20 is a phosphoenolpyruvate binding site. Residues Gly92 and Arg120 each contribute to the phosphoenolpyruvate site. 3-phosphoshikimate is bound by residues Ser165, Gln167, Asp313, and Lys340. Gln167 contacts phosphoenolpyruvate. The Proton acceptor role is filled by Asp313. Arg344 and Arg388 together coordinate phosphoenolpyruvate.

It belongs to the EPSP synthase family. As to quaternary structure, monomer.

It is found in the cytoplasm. The enzyme catalyses 3-phosphoshikimate + phosphoenolpyruvate = 5-O-(1-carboxyvinyl)-3-phosphoshikimate + phosphate. It functions in the pathway metabolic intermediate biosynthesis; chorismate biosynthesis; chorismate from D-erythrose 4-phosphate and phosphoenolpyruvate: step 6/7. Functionally, catalyzes the transfer of the enolpyruvyl moiety of phosphoenolpyruvate (PEP) to the 5-hydroxyl of shikimate-3-phosphate (S3P) to produce enolpyruvyl shikimate-3-phosphate and inorganic phosphate. The protein is 3-phosphoshikimate 1-carboxyvinyltransferase of Geobacillus kaustophilus (strain HTA426).